Here is a 416-residue protein sequence, read N- to C-terminus: Tyrosine--tRNA ligase (416 aa).

Residue Tyr-40 participates in L-tyrosine binding. A 'HIGH' region motif is present at residues 45-54 (ATAASLHVGH). L-tyrosine is bound by residues Tyr-177 and Gln-181. Positions 237–241 (KMGKS) match the 'KMSKS' region motif. Residue Lys-240 participates in ATP binding. The region spanning 351-416 (LSVAHFLVAA…RKKHKLVRLS (66 aa)) is the S4 RNA-binding domain.

The protein belongs to the class-I aminoacyl-tRNA synthetase family. TyrS type 1 subfamily. Homodimer.

It localises to the cytoplasm. The enzyme catalyses tRNA(Tyr) + L-tyrosine + ATP = L-tyrosyl-tRNA(Tyr) + AMP + diphosphate + H(+). In terms of biological role, catalyzes the attachment of tyrosine to tRNA(Tyr) in a two-step reaction: tyrosine is first activated by ATP to form Tyr-AMP and then transferred to the acceptor end of tRNA(Tyr). The polypeptide is Tyrosine--tRNA ligase (Cereibacter sphaeroides (strain ATCC 17029 / ATH 2.4.9) (Rhodobacter sphaeroides)).